A 128-amino-acid polypeptide reads, in one-letter code: Large ribosomal subunit protein bL12 (128 aa).

As to quaternary structure, homodimer. Part of the 50S ribosomal subunit; present in 6 copies per ribosome. Forms part of the ribosomal stalk which helps the ribosome interact with GTP-bound translation factors. Forms a heptameric L10(L12)2(L12)2(L12)2 complex, where L10 forms an elongated spine to which 3 L12 dimers bind in a sequential fashion.

In terms of biological role, forms part of the ribosomal stalk which helps the ribosome interact with GTP-bound translation factors. Is thus essential for accurate translation. In Thermotoga maritima (strain ATCC 43589 / DSM 3109 / JCM 10099 / NBRC 100826 / MSB8), this protein is Large ribosomal subunit protein bL12.